The sequence spans 354 residues: MNTVVENSLEQARPVFPFTAIVGQEEMKLALILNVIDPKIGGVMIMGDRGTGKSTTVRALVDLLPEIQVVADDPFNSDPKDPELMSQEVRGRLQRKETVPITTKKISMVDLPLGATEDRVCGTIDIEKALTEGVKAFEPGLLAKANRGILYVDEVNLLDDHLVDVLLDSAASGWNTVEREGISISHPARFILVGSGNPEEGELRPQLLDRFGMHAQIGTVKEPNLRVQIVEQRANFDAAPLEFRETYQDSQAQLGNQILEARNLLPQIQLEYDYRVKISQICSELDVDGLRGDLVTNRASKAIASFEGRTEVTPEDIFRVIPLCLRHRLRKDPLESIDSGDKVRDIFKRVFGYE.

Residue 47–54 participates in ATP binding; it reads GDRGTGKS. Cysteines 282 and 324 form a disulfide.

Belongs to the Mg-chelatase subunits D/I family. As to quaternary structure, the magnesium chelatase complex is a heterotrimer consisting of subunits CHLI, CHLD and CHLH.

It localises to the plastid. The protein localises to the chloroplast. The enzyme catalyses protoporphyrin IX + Mg(2+) + ATP + H2O = Mg-protoporphyrin IX + ADP + phosphate + 3 H(+). Its pathway is porphyrin-containing compound metabolism; chlorophyll biosynthesis. With respect to regulation, redox regulation; active in reducing conditions, inactive in oxidizing conditions. Thioredoxins f and m mediate the reversible reductive activation of oxidized CHLI. Its function is as follows. Involved in chlorophyll biosynthesis. Catalyzes the insertion of magnesium ion into protoporphyrin IX to yield Mg-protoporphyrin IX. The magnesium-chelatase is a complex of three subunits, CHLI, CHLD and CHLH. The reaction takes place in two steps, with an ATP-dependent activation followed by an ATP-dependent chelation step. The protein is Magnesium-chelatase subunit ChlI (chlI) of Chlorella vulgaris (Green alga).